Here is a 764-residue protein sequence, read N- to C-terminus: MSMTTIAPEQVNRIVWNQHHDPFEILGSHPIEQNGKTVWVVRAYLPNASAAWVVLPEQRQEYPMQTVHDPHFFECIIETSELSNYQLKTKEGEHERVSYDPYAFRSPRLTDFDLHLFAEGNHHRIYEKLGAHFTEVGGVKGVYFAVWAPNARNVSVLGDFNLWDGRKHQMRKGATGVWELFIPEIGVGEHYKYEIKNFAGHIYEKSDPFGFQQEPRPKTASIVSNLNSYNWSDEDWLEQRRHTDPLTQPISVYEVHLGSWLHAASAEPAQLPNGETEPVVIASELNPGARFLTYRELASRLIPYVKELGYTHIELLPIAEHPFDGSWGYQVTGYYAPTSRFGTPEDFMYFVDQCHQNNIGVLVDWVPGHFPKDGHGLAFFDGTHLYEHADPRKGEHKEWGTLVFNYSRNEVRNFLVANALFWFDKYHIDGIRVDAVASMLYLDYCRKEGEWLPNQYGGRENLEAADFLRQVNHLLFSYFPGVLSIAEESTDWPMVSWPTYTGGLGFNLKWNMGWMHDMLDYFSMDPWFRQFHQNNITFSMWYNHSENFMLALSHDEVVHGKSNIIGKMPGDKWQKLANVRCLFAYMFAHPGKKTMFMSMEFGQWSEWNVWADLEWPLLQFEPHQQLKKFFTELNKLYRSEPALYTLDFAREGFDWIDCSDNRHSVVSFIRREKDTENFVVVICNFTPQPHSHYRIGVPEKGFYTELFNSDARQYGGSNMGNLGGKWTDDWSMHNRPYSLDLCLPPLGVLILKMDKEKTAKALGS.

Asp-434 (nucleophile) is an active-site residue. Glu-487 acts as the Proton donor in catalysis.

It belongs to the glycosyl hydrolase 13 family. GlgB subfamily. As to quaternary structure, monomer.

It carries out the reaction Transfers a segment of a (1-&gt;4)-alpha-D-glucan chain to a primary hydroxy group in a similar glucan chain.. The protein operates within glycan biosynthesis; glycogen biosynthesis. Functionally, catalyzes the formation of the alpha-1,6-glucosidic linkages in glycogen by scission of a 1,4-alpha-linked oligosaccharide from growing alpha-1,4-glucan chains and the subsequent attachment of the oligosaccharide to the alpha-1,6 position. This chain is 1,4-alpha-glucan branching enzyme GlgB, found in Nostoc sp. (strain PCC 7120 / SAG 25.82 / UTEX 2576).